The following is a 337-amino-acid chain: Tryptophan--tRNA ligase (337 aa).

ATP is bound by residues 11–13 and 19–20; these read QPT and GN. A 'HIGH' region motif is present at residues 12-20; that stretch reads PTGALHLGN. Asp135 contacts L-tryptophan. ATP-binding positions include 147 to 149, Val191, and 200 to 204; these read GED and KMSKS. The 'KMSKS' region signature appears at 200 to 204; it reads KMSKS.

It belongs to the class-I aminoacyl-tRNA synthetase family. Homodimer.

The protein localises to the cytoplasm. It catalyses the reaction tRNA(Trp) + L-tryptophan + ATP = L-tryptophyl-tRNA(Trp) + AMP + diphosphate + H(+). In terms of biological role, catalyzes the attachment of tryptophan to tRNA(Trp). The polypeptide is Tryptophan--tRNA ligase (Prochlorococcus marinus (strain MIT 9313)).